Reading from the N-terminus, the 543-residue chain is Gap junction alpha-10 protein (543 aa).

The Cytoplasmic portion of the chain corresponds to M1–S16. A helical transmembrane segment spans residues H17 to L37. Over R38–R76 the chain is Extracellular. The helical transmembrane segment at F77 to L97 threads the bilayer. The Cytoplasmic segment spans residues Y98–S165. Residues V166–L186 traverse the membrane as a helical segment. At Y187–T209 the chain is on the extracellular side. The helical transmembrane segment at I210–I230 threads the bilayer. The Cytoplasmic segment spans residues F231–S543. Disordered regions lie at residues P306–G359 and P379–R424. A compositionally biased stretch (basic and acidic residues) spans N317–H328. Residues A344–G359 show a composition bias toward polar residues. A compositionally biased stretch (basic and acidic residues) spans T400–M413.

It belongs to the connexin family. Alpha-type (group II) subfamily. In terms of assembly, a connexon is composed of a hexamer of connexins. Expressed in skeletal muscle and heart.

It is found in the cell membrane. The protein localises to the cell junction. Its subcellular location is the gap junction. In terms of biological role, one gap junction consists of a cluster of closely packed pairs of transmembrane channels, the connexons, through which materials of low MW diffuse from one cell to a neighboring cell. Involved in tracer coupling between horizontal cells of the retina. May play a role in the regulation of horizontal cell patterning. The polypeptide is Gap junction alpha-10 protein (GJA10) (Homo sapiens (Human)).